A 535-amino-acid polypeptide reads, in one-letter code: Cytochrome c oxidase subunit 1 (535 aa).

Residues 21-43 form a helical membrane-spanning segment; the sequence is VLYFIFALFSAMIGTGLSAIIRL. Residues E44 and G49 each contribute to the Ca(2+) site. 6 helical membrane passes run 63-85, 106-128, 153-175, 188-210, 242-264, and 271-293; these read VITAHAILMIFFFVMPALVGGFG, ISFWLLVPSLILILTSALVEAGA, IFSLHLSGFSSLLGAINFITTFI, PLFAWAVLFTAILLLLSLPVLAA, YWWNHPEVYILIIPGFGIISHAV, and PVFGVQGMIYAMWSIGLLGFCVW. H67 contacts Fe(II)-heme a. H246 contacts Cu cation. A cross-link (1'-histidyl-3'-tyrosine (His-Tyr)) is located at residues 246–250; the sequence is HPEVY. Residue Y250 participates in O2 binding. Cu cation is bound by residues H295 and H296. The next 2 helical transmembrane spans lie at 308-330 and 342-364; these read AYFTSATMVIAVPTSIKIFSWLA and TALFALGFIFLFTIGGLTGVVLA. Mg(2+) contacts are provided by H373 and D374. Helical transmembrane passes span 379–401, 414–436, and 456–478; these read VAHFHYVLSMGAVFSIFCGWYLW, LSHIHFWLMFIGVNVTFFPMHFL, and NQVASLGSIISIVASIVFIYVVY. H381 lines the heme a3 pocket. H383 contacts Fe(II)-heme a.

It belongs to the heme-copper respiratory oxidase family. Component of the cytochrome c oxidase (complex IV, CIV), a multisubunit enzyme composed of a catalytic core of 3 subunits and several supernumerary subunits. The complex exists as a monomer or a dimer and forms supercomplexes (SCs) in the inner mitochondrial membrane with ubiquinol-cytochrome c oxidoreductase (cytochrome b-c1 complex, complex III, CIII). Heme serves as cofactor. Cu cation is required as a cofactor.

It is found in the mitochondrion inner membrane. It catalyses the reaction 4 Fe(II)-[cytochrome c] + O2 + 8 H(+)(in) = 4 Fe(III)-[cytochrome c] + 2 H2O + 4 H(+)(out). It participates in energy metabolism; oxidative phosphorylation. Functionally, component of the cytochrome c oxidase, the last enzyme in the mitochondrial electron transport chain which drives oxidative phosphorylation. The respiratory chain contains 3 multisubunit complexes succinate dehydrogenase (complex II, CII), ubiquinol-cytochrome c oxidoreductase (cytochrome b-c1 complex, complex III, CIII) and cytochrome c oxidase (complex IV, CIV), that cooperate to transfer electrons derived from NADH and succinate to molecular oxygen, creating an electrochemical gradient over the inner membrane that drives transmembrane transport and the ATP synthase. Cytochrome c oxidase is the component of the respiratory chain that catalyzes the reduction of oxygen to water. Electrons originating from reduced cytochrome c in the intermembrane space (IMS) are transferred via the dinuclear copper A center (CU(A)) of subunit 2 and heme A of subunit 1 to the active site in subunit 1, a binuclear center (BNC) formed by heme A3 and copper B (CU(B)). The BNC reduces molecular oxygen to 2 water molecules using 4 electrons from cytochrome c in the IMS and 4 protons from the mitochondrial matrix. This Yarrowia lipolytica (strain CLIB 122 / E 150) (Yeast) protein is Cytochrome c oxidase subunit 1 (COX1).